The primary structure comprises 81 residues: Photosystem I iron-sulfur center (81 aa).

4Fe-4S ferredoxin-type domains follow at residues 2–31 (AHSV…MVPW) and 39–68 (IASA…VRVY). The [4Fe-4S] cluster site is built by Cys-11, Cys-14, Cys-17, Cys-21, Cys-48, Cys-51, Cys-54, and Cys-58.

As to quaternary structure, the eukaryotic PSI reaction center is composed of at least 11 subunits. Requires [4Fe-4S] cluster as cofactor.

Its subcellular location is the plastid. It is found in the chloroplast thylakoid membrane. The catalysed reaction is reduced [plastocyanin] + hnu + oxidized [2Fe-2S]-[ferredoxin] = oxidized [plastocyanin] + reduced [2Fe-2S]-[ferredoxin]. Apoprotein for the two 4Fe-4S centers FA and FB of photosystem I (PSI); essential for photochemical activity. FB is the terminal electron acceptor of PSI, donating electrons to ferredoxin. The C-terminus interacts with PsaA/B/D and helps assemble the protein into the PSI complex. Required for binding of PsaD and PsaE to PSI. PSI is a plastocyanin-ferredoxin oxidoreductase, converting photonic excitation into a charge separation, which transfers an electron from the donor P700 chlorophyll pair to the spectroscopically characterized acceptors A0, A1, FX, FA and FB in turn. This chain is Photosystem I iron-sulfur center, found in Gnetum gnemon (Spanish joint-fir).